Here is a 249-residue protein sequence, read N- to C-terminus: ATP synthase subunit a (249 aa).

The next 6 membrane-spanning stretches (helical) occupy residues 26-46 (FTNSSLFMVATVAAAGAFLYL), 84-104 (FFPFVFSLFMFVLVANLLGLF), 114-134 (IVVTFALALLVIGTVLVYGFW), 143-163 (LFVPEGVPGVLLPLVVLIEVI), 185-205 (ITLKVFAGFVTSLGALGVAGA), and 208-228 (AVLPLAMTVALTGLELLVAFL).

Belongs to the ATPase A chain family. In terms of assembly, F-type ATPases have 2 components, CF(1) - the catalytic core - and CF(0) - the membrane proton channel. CF(1) has five subunits: alpha(3), beta(3), gamma(1), delta(1), epsilon(1). CF(0) has three main subunits: a(1), b(2) and c(9-12). The alpha and beta chains form an alternating ring which encloses part of the gamma chain. CF(1) is attached to CF(0) by a central stalk formed by the gamma and epsilon chains, while a peripheral stalk is formed by the delta and b chains.

It is found in the cell inner membrane. In terms of biological role, key component of the proton channel; it plays a direct role in the translocation of protons across the membrane. This is ATP synthase subunit a from Chelativorans sp. (strain BNC1).